Reading from the N-terminus, the 427-residue chain is Tol-Pal system protein TolB (427 aa).

The first 23 residues, 1-23 (MKLIARLMSMCAVLFFAINSAYA), serve as a signal peptide directing secretion.

The protein belongs to the TolB family. The Tol-Pal system is composed of five core proteins: the inner membrane proteins TolA, TolQ and TolR, the periplasmic protein TolB and the outer membrane protein Pal. They form a network linking the inner and outer membranes and the peptidoglycan layer.

It is found in the periplasm. Part of the Tol-Pal system, which plays a role in outer membrane invagination during cell division and is important for maintaining outer membrane integrity. The protein is Tol-Pal system protein TolB of Actinobacillus succinogenes (strain ATCC 55618 / DSM 22257 / CCUG 43843 / 130Z).